A 205-amino-acid polypeptide reads, in one-letter code: uncharacterized protein (205 aa).

Transmembrane regions (helical) follow at residues Leu4–Asp24, Lys105–Leu125, Phe130–Asn150, Trp151–Cys171, and Ile182–Ile202.

Its subcellular location is the cell membrane. This is an uncharacterized protein from Methanocaldococcus jannaschii (strain ATCC 43067 / DSM 2661 / JAL-1 / JCM 10045 / NBRC 100440) (Methanococcus jannaschii).